The sequence spans 388 residues: 3-sulfinopropanoyl-CoA desulfinase (388 aa).

FAD is bound by residues I121–T124, S130, and H153–T156. Y240 to N241 lines the substrate pocket. FAD-binding positions include R269, Q336, G363–Q367, and Q384.

Belongs to the acyl-CoA dehydrogenase family. As to quaternary structure, homotrimer or homotetramer. FAD serves as cofactor.

The enzyme catalyses 3-sulfinopropanoyl-CoA + H2O = propanoyl-CoA + sulfite + H(+). Functionally, catalyzes the conversion 3-sulfinopropanoyl-CoA (3SP-CoA) to propanoyl-CoA by abstraction of sulfite. Does not show dehydrogenase activity. The protein is 3-sulfinopropanoyl-CoA desulfinase of Paraburkholderia xenovorans (strain LB400).